We begin with the raw amino-acid sequence, 337 residues long: 2-oxoglutarate receptor 1 (337 aa).

The Extracellular segment spans residues 1–38 (MIEPLDSPASDSDFLDYPSALGNCTDEQISFKMQYLPV). Asn23 is a glycosylation site (N-linked (GlcNAc...) asparagine). A helical membrane pass occupies residues 39 to 59 (IYSIIFLVGFPGNTVAISIYI). Residues 60-69 (FKMRPWRGST) lie on the Cytoplasmic side of the membrane. Residues 70–90 (VIMLNLALTDLLYLTSLPFLI) form a helical membrane-spanning segment. At 91-116 (HYYASGENWIFGDFMCKFIRFGFHFN) the chain is on the extracellular side. An intrachain disulfide couples Cys106 to Cys183. Residues 117–137 (LYSSILFLTCFSLFRYVVIIH) traverse the membrane as a helical segment. Over 138–151 (PMSCFSIQKTRWAV) the chain is Cytoplasmic. A helical membrane pass occupies residues 152–172 (VACAGVWVISLVAVMPMTFLI). The Extracellular portion of the chain corresponds to 173-200 (TSTTRTNRSACLDLTSSDDLTTIKWYNL). Residues 201-221 (ILTATTFCLPLVIVTLCYTTI) form a helical membrane-spanning segment. Topologically, residues 222 to 242 (ISTLTHGPRTHSCFKQKARRL) are cytoplasmic. The chain crosses the membrane as a helical span at residues 243-263 (TILLLLVFYICFLPFHILRVI). The Extracellular portion of the chain corresponds to 264–284 (RIESRLLSISCSIESHIHEAY). The chain crosses the membrane as a helical span at residues 285-305 (IVSRPLAALNTFGNLLLYVVV). Residues 306–337 (SNNFQQAFCSIVRCKASGDLEQGKKDSCSNNP) lie on the Cytoplasmic side of the membrane.

Belongs to the G-protein coupled receptor 1 family. In terms of tissue distribution, predominantly expressed in the kidney with limited expression in the testis and the smooth muscle. Expressed in SLC26A4/pendrin-positive type B and non-A non-B intercalated cells (at protein level).

The protein localises to the cell membrane. In terms of biological role, g protein-coupled receptor for dicarboxylates and amino dicarboxylates. Receptor for itaconate produced by activated macrophages upon bacterial infection. In the respiratory epithelium, couples the binding of itaconate to the activation of GNA11 and downstream intracellular Ca(2+) release, leading to mucocilliary clearance of airborne pathogens. Receptor for leukotriene E4 (LTE4) produced by mast cells upon allergic inflammation. Binds with high affinity to LTE4 and elicits mucin release from pulmonary epithelium in response to airborne fungi allergens. Regulates mucin-producing goblet cell homeostasis. Receptor for alpha-ketoglutarate produced by proximal tubule renal cells upon metabolic alkalosis. In an intrarenal paracrine signaling pathway, binds alpha-ketoglutarate and drives transepithelial salt reabsorption and bicarbonate secretion by SLC26A4/pendrin-positive intercalated cells. The polypeptide is 2-oxoglutarate receptor 1 (Oxgr1) (Mus musculus (Mouse)).